We begin with the raw amino-acid sequence, 107 residues long: Holo-[acyl-carrier-protein] synthase (107 aa).

Residues aspartate 10 and glutamate 54 each contribute to the Mg(2+) site.

It belongs to the P-Pant transferase superfamily. AcpS family. Mg(2+) is required as a cofactor.

It is found in the cytoplasm. It catalyses the reaction apo-[ACP] + CoA = holo-[ACP] + adenosine 3',5'-bisphosphate + H(+). Its function is as follows. Transfers the 4'-phosphopantetheine moiety from coenzyme A to a Ser of acyl-carrier-protein. The protein is Holo-[acyl-carrier-protein] synthase of Mycoplasma mobile (strain ATCC 43663 / 163K / NCTC 11711) (Mesomycoplasma mobile).